The sequence spans 132 residues: Small ribosomal subunit protein uS8 (132 aa).

Belongs to the universal ribosomal protein uS8 family. Part of the 30S ribosomal subunit. Contacts proteins S5 and S12.

In terms of biological role, one of the primary rRNA binding proteins, it binds directly to 16S rRNA central domain where it helps coordinate assembly of the platform of the 30S subunit. The protein is Small ribosomal subunit protein uS8 of Brucella abortus (strain S19).